Here is an 84-residue protein sequence, read N- to C-terminus: MAKASSTLVLSIIFLVMFALVEQNMGCTATMGPCEKDKSCSATCRATFGDRANGFCDYSTSTSPGGECTCVYHCPPVVPHESHL.

An N-terminal signal peptide occupies residues 1–23; it reads MAKASSTLVLSIIFLVMFALVEQ. 4 disulfides stabilise this stretch: Cys-27–Cys-74, Cys-34–Cys-56, Cys-40–Cys-68, and Cys-44–Cys-70.

It belongs to the DEFL family.

It is found in the secreted. This Arabidopsis thaliana (Mouse-ear cress) protein is Defensin-like protein 172 (LCR60).